The sequence spans 426 residues: Enolase (426 aa).

A (2R)-2-phosphoglycerate-binding site is contributed by Gln-163. The active-site Proton donor is the Glu-205. 3 residues coordinate Mg(2+): Asp-242, Glu-285, and Asp-312. Residues Lys-337, Arg-366, Ser-367, and Lys-388 each contribute to the (2R)-2-phosphoglycerate site. Residue Lys-337 is the Proton acceptor of the active site.

The protein belongs to the enolase family. The cofactor is Mg(2+).

The protein localises to the cytoplasm. The protein resides in the secreted. It localises to the cell surface. The enzyme catalyses (2R)-2-phosphoglycerate = phosphoenolpyruvate + H2O. It participates in carbohydrate degradation; glycolysis; pyruvate from D-glyceraldehyde 3-phosphate: step 4/5. Its function is as follows. Catalyzes the reversible conversion of 2-phosphoglycerate (2-PG) into phosphoenolpyruvate (PEP). It is essential for the degradation of carbohydrates via glycolysis. In Rhodospirillum centenum (strain ATCC 51521 / SW), this protein is Enolase.